Reading from the N-terminus, the 1122-residue chain is Angiopoietin-1 receptor (1122 aa).

Residues 1–22 form the signal peptide; that stretch reads MDSLAGLVLCGVSLLLYGVVEG. Residues 23–746 are Extracellular-facing; it reads AMDLILINSL…SADLGGGKML (724 aa). Cys44 and Cys102 are disulfide-bonded. One can recognise an Ig-like C2-type 1 domain in the interval 44-123; that stretch reads CIASGWHPHE…RTMKMRQQAS (80 aa). N-linked (GlcNAc...) asparagine glycosylation is found at Asn140 and Asn158. 3 EGF-like domains span residues 210-252, 254-299, and 301-341; these read RCEA…RTCE, ACEP…LQCN, and ACPS…LQCE. Intrachain disulfides connect Cys211-Cys220, Cys224-Cys233, Cys227-Cys240, Cys242-Cys251, Cys255-Cys264, Cys268-Cys274, Cys280-Cys287, Cys289-Cys298, Cys302-Cys311, Cys315-Cys323, Cys317-Cys329, Cys331-Cys340, and Cys370-Cys424. Residues 350–440 enclose the Ig-like C2-type 2 domain; sequence PQIEDLPDHI…GMVEKPFNIS (91 aa). N-linked (GlcNAc...) asparagine glycans are attached at residues Asn399, Asn438, Asn464, Asn558, Asn595, Asn648, and Asn690. 3 Fibronectin type-III domains span residues 444 to 539, 543 to 635, and 640 to 733; these read LPEP…TASI, PPRG…TLSD, and QPEN…TLPH. The helical transmembrane segment at 747 to 767 threads the bilayer; the sequence is LIAILGSAGMTCITVLLAFLI. The Cytoplasmic portion of the chain corresponds to 768–1122; it reads MLQLKRANVQ…GIDCSAEEAA (355 aa). In terms of domain architecture, Protein kinase spans 822–1094; that stretch reads IKFQDVIGEG…QILVSLNRML (273 aa). ATP-binding positions include 828–836 and Lys853; that span reads IGEGNFGQV. Tyr858 is modified (phosphotyrosine; by autocatalysis). The Proton acceptor role is filled by Asp962. 3 positions are modified to phosphotyrosine; by autocatalysis: Tyr990, Tyr1100, and Tyr1106.

This sequence belongs to the protein kinase superfamily. Tyr protein kinase family. Tie subfamily. As to quaternary structure, homodimer. Heterodimer with TIE1. Interacts with ANGPT1, ANGPT2 and ANGPT4. At cell-cell contacts in quiescent cells, forms a signaling complex composed of ANGPT1 plus TEK molecules from two adjoining cells. In the absence of endothelial cell-cell contacts, interaction with ANGPT1 mediates contacts with the extracellular matrix. Interacts (tyrosine phosphorylated) with TNIP2. Interacts (tyrosine phosphorylated) with SHC1 (via SH2 domain). Interacts with PTPRB; this promotes endothelial cell-cell adhesion. Interacts with DOK2, GRB2, GRB7, GRB14, PIK3R1 and PTPN11/SHP2. Colocalizes with DOK2 at contacts with the extracellular matrix in migrating cells. Proteolytic processing leads to the shedding of the extracellular domain (soluble TIE-2 alias sTIE-2). In terms of processing, autophosphorylated on tyrosine residues in response to ligand binding. Autophosphorylation occurs in trans, i.e. one subunit of the dimeric receptor phosphorylates tyrosine residues on the other subunit. Autophosphorylation occurs in a sequential manner, where Tyr-990 in the kinase activation loop is phosphorylated first, followed by autophosphorylation at Tyr-1106 and at additional tyrosine residues. ANGPT1-induced phosphorylation is impaired during hypoxia, due to increased expression of ANGPT2. Phosphorylation is important for interaction with GRB14, PIK3R1 and PTPN11. Phosphorylation at Tyr-1100 is important for interaction with GRB2 and GRB7. Phosphorylation at Tyr-1106 is important for interaction with DOK2 and for coupling to downstream signal transduction pathways in endothelial cells. Dephosphorylated by PTPRB. Post-translationally, ubiquitinated. The phosphorylated receptor is ubiquitinated and internalized, leading to its degradation. In terms of tissue distribution, specifically expressed in developing vascular endothelial cells. Abundantly expressed in lung and heart, moderately in brain, liver and kidney, and weakly in thymus, spleen and testis.

The protein resides in the cell membrane. It localises to the cell junction. It is found in the focal adhesion. Its subcellular location is the cytoplasm. The protein localises to the cytoskeleton. The protein resides in the secreted. It catalyses the reaction L-tyrosyl-[protein] + ATP = O-phospho-L-tyrosyl-[protein] + ADP + H(+). Angiopoietin binding leads to receptor dimerization and activation by autophosphorylation at Tyr-990 on the kinase activation loop. Its function is as follows. Tyrosine-protein kinase that acts as a cell-surface receptor for ANGPT1, ANGPT2 and ANGPT4 and regulates angiogenesis, endothelial cell survival, proliferation, migration, adhesion and cell spreading, reorganization of the actin cytoskeleton, but also maintenance of vascular quiescence. Has anti-inflammatory effects by preventing the leakage of pro-inflammatory plasma proteins and leukocytes from blood vessels. Required for normal angiogenesis and heart development during embryogenesis. Required for postnatal hematopoiesis. After birth, activates or inhibits angiogenesis, depending on the context. Inhibits angiogenesis and promotes vascular stability in quiescent vessels, where endothelial cells have tight contacts. In quiescent vessels, ANGPT1 oligomers recruit TEK to cell-cell contacts, forming complexes with TEK molecules from adjoining cells, and this leads to preferential activation of phosphatidylinositol 3-kinase and the AKT1 signaling cascades. In migrating endothelial cells that lack cell-cell adhesions, ANGT1 recruits TEK to contacts with the extracellular matrix, leading to the formation of focal adhesion complexes, activation of PTK2/FAK and of the downstream kinases MAPK1/ERK2 and MAPK3/ERK1, and ultimately to the stimulation of sprouting angiogenesis. ANGPT1 signaling triggers receptor dimerization and autophosphorylation at specific tyrosine residues that then serve as binding sites for scaffold proteins and effectors. Signaling is modulated by ANGPT2 that has lower affinity for TEK, can promote TEK autophosphorylation in the absence of ANGPT1, but inhibits ANGPT1-mediated signaling by competing for the same binding site. Signaling is also modulated by formation of heterodimers with TIE1, and by proteolytic processing that gives rise to a soluble TEK extracellular domain. The soluble extracellular domain modulates signaling by functioning as decoy receptor for angiopoietins. TEK phosphorylates DOK2, GRB7, GRB14, PIK3R1, SHC1 and TIE1. The protein is Angiopoietin-1 receptor (Tek) of Mus musculus (Mouse).